A 1249-amino-acid polypeptide reads, in one-letter code: Minor capsid protein M1249L (1249 aa).

This sequence belongs to the asfivirus M1249L family. As to quaternary structure, interacts with the minor capsid protein p17 and with the hexon capsid protein p72 capsomers; these interactions form a rigid zipper structure that stabilizes the capsomers. Interacts with host IRF3.

It is found in the virion. The protein localises to the host cytoplasm. Together with the penton and the other minor capsid proteins (p17, p49), forms a complicated network immediately below the outer capsid shell, stabilizing the whole capsid. In addition, blocks IFN-beta transactivation mediated by the cGAS-STING pathway and regulates the transcriptional activity of IFN-beta. Mechanistically, suppresses the phosphorylation of host key adapter protein TBK1 and degrades host IRF3 in the cytoplasm. The protein is Minor capsid protein M1249L of African swine fever virus (isolate Tick/Malawi/Lil 20-1/1983) (ASFV).